We begin with the raw amino-acid sequence, 149 residues long: Nucleoside diphosphate kinase 1 (149 aa).

An N-acetylmethionine modification is found at methionine 1. Lysine 9, phenylalanine 57, arginine 85, threonine 91, arginine 102, and asparagine 112 together coordinate ATP. Catalysis depends on histidine 115, which acts as the Pros-phosphohistidine intermediate.

Belongs to the NDK family. In terms of assembly, interacts with CAT1, CAT2 and CAT3. It depends on Mg(2+) as a cofactor.

The protein resides in the peroxisome. The protein localises to the nucleus. It is found in the cytoplasm. The catalysed reaction is a 2'-deoxyribonucleoside 5'-diphosphate + ATP = a 2'-deoxyribonucleoside 5'-triphosphate + ADP. It catalyses the reaction a ribonucleoside 5'-diphosphate + ATP = a ribonucleoside 5'-triphosphate + ADP. In terms of biological role, major role in the synthesis of nucleoside triphosphates other than ATP. The ATP gamma phosphate is transferred to the NDP beta phosphate via a ping-pong mechanism, using a phosphorylated active-site intermediate. Plays a role in response to reactive oxygen species (ROS) stress. This is Nucleoside diphosphate kinase 1 (NDK1) from Arabidopsis thaliana (Mouse-ear cress).